The following is a 149-amino-acid chain: Large ribosomal subunit protein eL24A (149 aa).

2 stretches are compositionally biased toward basic and acidic residues: residues 93–102 (KRNQRPEVRA) and 116–125 (KAASESEKKA). The disordered stretch occupies residues 93 to 149 (KRNQRPEVRAAARAAALKQRKDKKAASESEKKAIKAKSAASSARGQAIKNAKAAARH).

Belongs to the eukaryotic ribosomal protein eL24 family. Component of the large ribosomal subunit (LSU). Mature yeast ribosomes consist of a small (40S) and a large (60S) subunit. The 40S small subunit contains 1 molecule of ribosomal RNA (18S rRNA) and at least 33 different proteins. The large 60S subunit contains 3 rRNA molecules (25S, 5.8S and 5S rRNA) and at least 46 different proteins.

The protein localises to the cytoplasm. In terms of biological role, component of the ribosome, a large ribonucleoprotein complex responsible for the synthesis of proteins in the cell. The small ribosomal subunit (SSU) binds messenger RNAs (mRNAs) and translates the encoded message by selecting cognate aminoacyl-transfer RNA (tRNA) molecules. The large subunit (LSU) contains the ribosomal catalytic site termed the peptidyl transferase center (PTC), which catalyzes the formation of peptide bonds, thereby polymerizing the amino acids delivered by tRNAs into a polypeptide chain. The nascent polypeptides leave the ribosome through a tunnel in the LSU and interact with protein factors that function in enzymatic processing, targeting, and the membrane insertion of nascent chains at the exit of the ribosomal tunnel. This is Large ribosomal subunit protein eL24A (rpl2401) from Schizosaccharomyces pombe (strain 972 / ATCC 24843) (Fission yeast).